The chain runs to 162 residues: Interleukin-15 (162 aa).

The signal sequence occupies residues 1-29; it reads MRISKPHLRITSIQCYVCLLLNTHFLTEA. The propeptide occupies 30 to 48; sequence GIRVFILGCISAGIPKTEA. 2 cysteine pairs are disulfide-bonded: Cys-83-Cys-133 and Cys-90-Cys-136. 3 N-linked (GlcNAc...) asparagine glycosylation sites follow: Asn-119, Asn-127, and Asn-143.

Belongs to the IL-15/IL-21 family.

Its subcellular location is the secreted. Functionally, cytokine that plays a major role in the development of inflammatory and protective immune responses to microbial invaders and parasites by modulating immune cells of both the innate and adaptive immune systems. Stimulates the proliferation of natural killer cells, T-cells and B-cells and promotes the secretion of several cytokines. In monocytes, induces the production of IL8 and monocyte chemotactic protein 1/CCL2, two chemokines that attract neutrophils and monocytes respectively to sites of infection. Unlike most cytokines, which are secreted in soluble form, IL15 is expressed in association with its high affinity IL15RA on the surface of IL15-producing cells and delivers signals to target cells that express IL2RB and IL2RG receptor subunits. Binding to its receptor triggers the phosphorylation of JAK1 and JAK3 and the recruitment and subsequent phosphorylation of signal transducer and activator of transcription-3/STAT3 and STAT5. In mast cells, induces the rapid tyrosine phosphorylation of STAT6 and thereby controls mast cell survival and release of cytokines such as IL4. The chain is Interleukin-15 (IL15) from Marmota himalayana (Himalayan marmot).